Reading from the N-terminus, the 270-residue chain is Imidazole glycerol phosphate synthase subunit HisF (270 aa).

Active-site residues include D11 and D130.

It belongs to the HisA/HisF family. As to quaternary structure, heterodimer of HisH and HisF.

The protein resides in the cytoplasm. The catalysed reaction is 5-[(5-phospho-1-deoxy-D-ribulos-1-ylimino)methylamino]-1-(5-phospho-beta-D-ribosyl)imidazole-4-carboxamide + L-glutamine = D-erythro-1-(imidazol-4-yl)glycerol 3-phosphate + 5-amino-1-(5-phospho-beta-D-ribosyl)imidazole-4-carboxamide + L-glutamate + H(+). The protein operates within amino-acid biosynthesis; L-histidine biosynthesis; L-histidine from 5-phospho-alpha-D-ribose 1-diphosphate: step 5/9. In terms of biological role, IGPS catalyzes the conversion of PRFAR and glutamine to IGP, AICAR and glutamate. The HisF subunit catalyzes the cyclization activity that produces IGP and AICAR from PRFAR using the ammonia provided by the HisH subunit. This chain is Imidazole glycerol phosphate synthase subunit HisF, found in Sorangium cellulosum (strain So ce56) (Polyangium cellulosum (strain So ce56)).